The chain runs to 176 residues: Dual specificity phosphatase 28 (176 aa).

The 143-residue stretch at Pro-17 to Ala-159 folds into the Tyrosine-protein phosphatase domain. The Phosphocysteine intermediate role is filled by Cys-103.

Belongs to the protein-tyrosine phosphatase family. Non-receptor class dual specificity subfamily. As to quaternary structure, monomer.

It catalyses the reaction O-phospho-L-tyrosyl-[protein] + H2O = L-tyrosyl-[protein] + phosphate. It carries out the reaction O-phospho-L-seryl-[protein] + H2O = L-seryl-[protein] + phosphate. The catalysed reaction is O-phospho-L-threonyl-[protein] + H2O = L-threonyl-[protein] + phosphate. In terms of biological role, has phosphatase activity with the synthetic substrate 6,8-difluoro-4-methylumbelliferyl phosphate (in vitro). Has almost no detectable activity with phosphotyrosine, even less activity with phosphothreonine and displays complete lack of activity with phosphoserine. The poor activity with phosphotyrosine may be due to steric hindrance by bulky amino acid sidechains that obstruct access to the active site. This chain is Dual specificity phosphatase 28 (DUSP28), found in Homo sapiens (Human).